The chain runs to 672 residues: Acetoacetyl-CoA synthetase (672 aa).

It belongs to the ATP-dependent AMP-binding enzyme family.

The protein localises to the cytoplasm. Its subcellular location is the cytosol. It carries out the reaction acetoacetate + ATP + CoA = acetoacetyl-CoA + AMP + diphosphate. Converts acetoacetate to acetoacetyl-CoA in the cytosol. Ketone body-utilizing enzyme, responsible for the synthesis of cholesterol and fatty acids. The sequence is that of Acetoacetyl-CoA synthetase (AACS) from Macaca fascicularis (Crab-eating macaque).